A 276-amino-acid chain; its full sequence is Bifunctional protein FolD (276 aa).

NADP(+) is bound by residues Asn-158 to Ser-160, Ser-183, and Ile-224.

This sequence belongs to the tetrahydrofolate dehydrogenase/cyclohydrolase family. Homodimer.

The enzyme catalyses (6R)-5,10-methylene-5,6,7,8-tetrahydrofolate + NADP(+) = (6R)-5,10-methenyltetrahydrofolate + NADPH. It catalyses the reaction (6R)-5,10-methenyltetrahydrofolate + H2O = (6R)-10-formyltetrahydrofolate + H(+). The protein operates within one-carbon metabolism; tetrahydrofolate interconversion. Its function is as follows. Catalyzes the oxidation of 5,10-methylenetetrahydrofolate to 5,10-methenyltetrahydrofolate and then the hydrolysis of 5,10-methenyltetrahydrofolate to 10-formyltetrahydrofolate. This Picrophilus torridus (strain ATCC 700027 / DSM 9790 / JCM 10055 / NBRC 100828 / KAW 2/3) protein is Bifunctional protein FolD.